The following is a 492-amino-acid chain: Protein kinase US3 homolog (492 aa).

A disordered region spans residues 99-137; sequence ADLHESQRGQPSGATDSQASTLETESAPPSADSSSSAKL. Polar residues predominate over residues 106–122; it reads RGQPSGATDSQASTLET. Positions 124–135 are enriched in low complexity; it reads SAPPSADSSSSA. The Protein kinase domain maps to 147–446; that stretch reads YRVIGTLPAG…ASELLALPLF (300 aa). Residues 153–161 and Lys187 contribute to the ATP site; that span reads LPAGSFGKI. Asp281 functions as the Proton acceptor in the catalytic mechanism.

This sequence belongs to the protein kinase superfamily. Ser/Thr protein kinase family. In terms of processing, phosphorylated by UL13 homolog; this phosphorylation regulates subsequent phosphorylation of UL31 and UL34 homologs by US3. Autophosphorylated.

Its subcellular location is the host cytoplasm. The protein localises to the host nucleus. It carries out the reaction L-seryl-[protein] + ATP = O-phospho-L-seryl-[protein] + ADP + H(+). The enzyme catalyses L-threonyl-[protein] + ATP = O-phospho-L-threonyl-[protein] + ADP + H(+). In terms of biological role, multifunctional serine/threonine kinase that plays a role in several processes including egress of virus particles from the nucleus, modulation of the actin cytoskeleton and inhibition of apoptosis. Phosphorylates UL31 and UL34 homologs, two critical regulators of capsid budding from nucleus to endoplasmic reticulum, thereby facilitating virion egress. Modulates and redistributes host components of the nuclear envelope, including LMNA, emerin/EMD and the nuclear matrix protein MATR3. Phosphorylates envelope glycoprotein B (gB), probably to direct it to the cell surface. Promotes virus intracellular spread by restructuring host cell cytoskeleton. Blocks host apoptosis to extend cell survival and allow efficient viral replication. Promotes viral gene expression by phosphorylating host HDAC2 to reduce viral genome silencing. The sequence is that of Protein kinase US3 homolog (US3) from Amazona oratrix (yellow-headed parrot).